A 364-amino-acid chain; its full sequence is Fructose-bisphosphate aldolase B (364 aa).

Alanine 2 is subject to N-acetylalanine. Lysine 13 is modified (N6-succinyllysine). Serine 36 is modified (phosphoserine). Phosphothreonine is present on threonine 39. Arginine 43 serves as a coordination point for beta-D-fructose 1,6-bisphosphate. Threonine 119 is subject to Phosphothreonine. Lysine 121 is subject to N6-succinyllysine. Serine 132 carries the phosphoserine modification. The Proton acceptor role is filled by glutamate 188. Catalysis depends on lysine 230, which acts as the Schiff-base intermediate with dihydroxyacetone-P. A phosphoserine mark is found at serine 272, serine 276, serine 299, and serine 301. Residue 272–274 (SGG) coordinates beta-D-fructose 1,6-bisphosphate. Residue arginine 304 coordinates beta-D-fructose 1,6-bisphosphate. Position 309 is a phosphoserine (serine 309). The residue at position 317 (lysine 317) is an N6-succinyllysine.

Belongs to the class I fructose-bisphosphate aldolase family. Homotetramer. Interacts with BBS1, BBS2, BBS4 and BBS7. Forms a ternary complex with G6PD and TP53; this interaction is direct.

Its subcellular location is the cytoplasm. The protein localises to the cytosol. It localises to the cytoskeleton. It is found in the microtubule organizing center. The protein resides in the centrosome. Its subcellular location is the centriolar satellite. It carries out the reaction beta-D-fructose 1,6-bisphosphate = D-glyceraldehyde 3-phosphate + dihydroxyacetone phosphate. It catalyses the reaction beta-D-fructose 1-phosphate = D-glyceraldehyde + dihydroxyacetone phosphate. The protein operates within carbohydrate degradation; glycolysis; D-glyceraldehyde 3-phosphate and glycerone phosphate from D-glucose: step 4/4. It functions in the pathway carbohydrate biosynthesis; gluconeogenesis. It participates in carbohydrate metabolism; fructose metabolism. Catalyzes the aldol cleavage of fructose 1,6-biphosphate to form two triosephosphates dihydroxyacetone phosphate and D-glyceraldehyde 3-phosphate in glycolysis as well as the reverse stereospecific aldol addition reaction in gluconeogenesis. In fructolysis, metabolizes fructose 1-phosphate derived from the phosphorylation of dietary fructose by fructokinase into dihydroxyacetone phosphate and D-glyceraldehyde. Acts as an adapter independently of its enzymatic activity, exerts a tumor suppressor role by stabilizing the ternary complex with G6PD and TP53 to inhibit G6PD activity and keep oxidative pentose phosphate metabolism in check. This chain is Fructose-bisphosphate aldolase B (ALDOB), found in Bos taurus (Bovine).